The sequence spans 329 residues: Cytosolic arginine sensor for mTORC1 subunit 2 (329 aa).

2 ACT domains span residues 72 to 140 (ADAT…HTLS) and 262 to 322 (ELWK…HALK).

This sequence belongs to the GATS family. In terms of assembly, forms homodimers and heterodimers with CASTOR1. Interacts with the GATOR2 complex which is composed of MIOS, SEC13, SEH1L, WDR24 and WDR59; the interaction is not regulated by arginine.

Its subcellular location is the cytoplasm. The protein resides in the cytosol. In terms of biological role, functions as a negative regulator of the TORC1 signaling pathway through the GATOR complex. As part of homodimers or heterodimers with CASTOR1, directly binds and inhibits the GATOR subcomplex GATOR2 and thereby mTORC1. Does not directly bind arginine, but binding of arginine to CASTOR1 disrupts the interaction of CASTOR2-containing heterodimers with GATOR2 which can in turn activate mTORC1 and the TORC1 signaling pathway. This chain is Cytosolic arginine sensor for mTORC1 subunit 2, found in Mus musculus (Mouse).